The sequence spans 539 residues: MPLRDYNAAVDFVDRNVAEGRGGKIAFIDPQRSLSYGELRDAVARVGPMLARLGVEQENRIALVLKDTVDFPILFWGAIRAGIVPVLLNTRLTADQYRYLLEDSRSRVVFASSEFLPVIEEAAADLPHLRTIIAVGDAPAPTLQLANLLATEQEGGAPAATCADDIAYWQYSSGTTGMPKGVMHVHSSPRVMAENAGRRIGYREDDVVFSAAKLFFAYGLGNAMFCPMGIGATSVLYPERPTADSVFDTLRLHQPTLLFAVPTLYAAMLADPRSRTETLPDRLRLCVSAGEPLPAQVGLNWRNRFGHDIVNGVGSTEMGHLFLTNLPHAVEYGTSGVPVDGYRLRLVGDRGQDVADDEIGELLVSGGSSAAGYWNQRDKTRTTFVGEWTRTGDKYHRRADGVYTYCGRTDDIFKVSGIWVSPFEIEQALMSHAKVLEAAVIPAEDTDGLIKPKAFIVLASRGDIDPGALFDELKEHVKSAIGPWKYPRWIQIMDDLPKTSSGKLQRYLLREMTLGGIEATESAPSEPALYGRVVAGNGR.

This sequence belongs to the ATP-dependent AMP-binding enzyme family. Benzoate-CoA ligase subfamily. Homodimer. Post-translationally, the N-terminus is blocked.

The catalysed reaction is 4-hydroxybenzoate + ATP + CoA = 4-hydroxybenzoyl-CoA + AMP + diphosphate. It catalyses the reaction benzoate + ATP + CoA = benzoyl-CoA + AMP + diphosphate. Catalyzes the ligation of 4-hydroxybenzoate, benzoate or cyclohex-1,4-dienecarboxylate and CoA at the expense of ATP. The enzyme shows low activity towards cyclo-2,5-dienecarboxylate, 4-fluorobenzoate, 4-chlorobenzoate and 2-methoxybenzoate. In Rhodopseudomonas palustris (strain ATCC BAA-98 / CGA009), this protein is 4-hydroxybenzoate--CoA/benzoate--CoA ligase (hbaA).